The primary structure comprises 202 residues: ATP-dependent Clp protease proteolytic subunit (202 aa).

S101 acts as the Nucleophile in catalysis. H126 is an active-site residue.

This sequence belongs to the peptidase S14 family. As to quaternary structure, component of the chloroplastic Clp protease core complex.

Its subcellular location is the plastid. It localises to the chloroplast stroma. It catalyses the reaction Hydrolysis of proteins to small peptides in the presence of ATP and magnesium. alpha-casein is the usual test substrate. In the absence of ATP, only oligopeptides shorter than five residues are hydrolyzed (such as succinyl-Leu-Tyr-|-NHMec, and Leu-Tyr-Leu-|-Tyr-Trp, in which cleavage of the -Tyr-|-Leu- and -Tyr-|-Trp bonds also occurs).. Its function is as follows. Cleaves peptides in various proteins in a process that requires ATP hydrolysis. Has a chymotrypsin-like activity. Plays a major role in the degradation of misfolded proteins. This is ATP-dependent Clp protease proteolytic subunit from Acorus gramineus (Dwarf sweet flag).